We begin with the raw amino-acid sequence, 396 residues long: Elongation factor Tu (396 aa).

One can recognise a tr-type G domain in the interval 10-205 (KPHVNIGTIG…AVDESIPDPV (196 aa)). Residues 19–26 (GHVDHGKT) form a G1 region. GTP is bound at residue 19–26 (GHVDHGKT). Position 26 (T26) interacts with Mg(2+). The G2 stretch occupies residues 62-66 (GITIN). The segment at 83–86 (DAPG) is G3. GTP-binding positions include 83–87 (DAPGH) and 138–141 (NKAD). Residues 138-141 (NKAD) are G4. The segment at 175 to 177 (SAL) is G5.

This sequence belongs to the TRAFAC class translation factor GTPase superfamily. Classic translation factor GTPase family. EF-Tu/EF-1A subfamily. In terms of assembly, monomer.

It is found in the cytoplasm. It catalyses the reaction GTP + H2O = GDP + phosphate + H(+). Its function is as follows. GTP hydrolase that promotes the GTP-dependent binding of aminoacyl-tRNA to the A-site of ribosomes during protein biosynthesis. The polypeptide is Elongation factor Tu (Mycolicibacterium gilvum (strain PYR-GCK) (Mycobacterium gilvum (strain PYR-GCK))).